The primary structure comprises 295 residues: Protoheme IX farnesyltransferase (295 aa).

9 consecutive transmembrane segments (helical) span residues 30–50 (LVVLTGVTGIIIAPGNIHPLI), 51–71 (AVISTLCIALGSGAAGAINMW), 93–115 (ISRSSALEVGLVLSFISVTIMMI), 119–136 (YISGILLAISIGFYIYVY), 148–168 (IVIGGAAGALPPIIGWTSVTG), 175–195 (LVLFLIIFMWTPPHFWALSLL), 219–239 (IHILVYSILLFPITLLPGLFL), 244–264 (LYEITAIPLGLMFVVQAFQVF), and 275–295 (MFTYSIIYLFILFTCIMLSSF).

The protein belongs to the UbiA prenyltransferase family. Protoheme IX farnesyltransferase subfamily.

The protein localises to the cell inner membrane. It carries out the reaction heme b + (2E,6E)-farnesyl diphosphate + H2O = Fe(II)-heme o + diphosphate. It participates in porphyrin-containing compound metabolism; heme O biosynthesis; heme O from protoheme: step 1/1. Its function is as follows. Converts heme B (protoheme IX) to heme O by substitution of the vinyl group on carbon 2 of heme B porphyrin ring with a hydroxyethyl farnesyl side group. The polypeptide is Protoheme IX farnesyltransferase (Ehrlichia ruminantium (strain Gardel)).